The sequence spans 169 residues: Histone H1.9 (169 aa).

2 stretches are compositionally biased toward polar residues: residues 1–10 and 19–36; these read MSLVSPSPDS and DASTSQVPSQSESKIGPN. The segment at 1–36 is disordered; the sequence is MSLVSPSPDSNAVMAGDQDASTSQVPSQSESKIGPN. The region spanning 43 to 116 is the H15 domain; the sequence is RKPTMSKVIL…GASGSFRLGK (74 aa). Phosphoserine is present on residues S62 and S65. Residues 118–142 are compositionally biased toward basic residues; it reads QAFKSKCKAKRRQRRQKPGQRRTGS. Positions 118–154 are disordered; that stretch reads QAFKSKCKAKRRQRRQKPGQRRTGSRRSLLGSKKSNN.

Belongs to the histone H1/H5 family.

The protein localises to the nucleus. It is found in the chromosome. DNA-binding protein that may be implicated in chromatin remodeling and/or transcriptional regulation during spermiogenesis, the process of spermatid maturation into spermatozoa. The chain is Histone H1.9 from Rattus norvegicus (Rat).